Consider the following 223-residue polypeptide: Protein phosphatase 1 regulatory subunit 3C (223 aa).

The CBM21 domain occupies 104–209; that stretch reads REQLTRKLVC…NNDGKNYSLH (106 aa).

As to quaternary structure, interacts with PPP1CC catalytic subunit of PP1 and associates with glycogen. Forms complexes with glycogen phosphorylase, glycogen synthase and phosphorylase kinase which is necessary for its regulation of PP1 activity.

Acts as a glycogen-targeting subunit for PP1 and regulates its activity. Activates glycogen synthase, reduces glycogen phosphorylase activity and limits glycogen breakdown. The sequence is that of Protein phosphatase 1 regulatory subunit 3C from Xenopus tropicalis (Western clawed frog).